Reading from the N-terminus, the 89-residue chain is Glutamyl-tRNA(Gln) amidotransferase subunit C (89 aa).

It belongs to the GatC family. Heterotrimer of A, B and C subunits.

It carries out the reaction L-glutamyl-tRNA(Gln) + L-glutamine + ATP + H2O = L-glutaminyl-tRNA(Gln) + L-glutamate + ADP + phosphate + H(+). It catalyses the reaction L-aspartyl-tRNA(Asn) + L-glutamine + ATP + H2O = L-asparaginyl-tRNA(Asn) + L-glutamate + ADP + phosphate + 2 H(+). In terms of biological role, allows the formation of correctly charged Asn-tRNA(Asn) or Gln-tRNA(Gln) through the transamidation of misacylated Asp-tRNA(Asn) or Glu-tRNA(Gln) in organisms which lack either or both of asparaginyl-tRNA or glutaminyl-tRNA synthetases. The reaction takes place in the presence of glutamine and ATP through an activated phospho-Asp-tRNA(Asn) or phospho-Glu-tRNA(Gln). In Thermus thermophilus (strain ATCC 27634 / DSM 579 / HB8), this protein is Glutamyl-tRNA(Gln) amidotransferase subunit C.